Here is a 163-residue protein sequence, read N- to C-terminus: uncharacterized protein (163 aa).

This is an uncharacterized protein from Methanocaldococcus jannaschii (strain ATCC 43067 / DSM 2661 / JAL-1 / JCM 10045 / NBRC 100440) (Methanococcus jannaschii).